The following is a 592-amino-acid chain: Probable translation initiation factor IF-2 (592 aa).

Residues 5 to 226 (IRSPFVVVMG…AGVSQRFIPR (222 aa)) form the tr-type G domain. The tract at residues 14–21 (GHVDVGKT) is G1. Residue 14–21 (GHVDVGKT) participates in GTP binding. Residues 39 to 43 (MITQH) are G2. Positions 80 to 83 (DTPG) are G3. Residues 80–84 (DTPGH) and 134–137 (NKLD) contribute to the GTP site. Positions 134-137 (NKLD) are G4. Residues 202–204 (SAV) are G5.

This sequence belongs to the TRAFAC class translation factor GTPase superfamily. Classic translation factor GTPase family. IF-2 subfamily.

Function in general translation initiation by promoting the binding of the formylmethionine-tRNA to ribosomes. Seems to function along with eIF-2. The chain is Probable translation initiation factor IF-2 from Pyrobaculum calidifontis (strain DSM 21063 / JCM 11548 / VA1).